A 373-amino-acid chain; its full sequence is Leucine aminopeptidase 1 (373 aa).

A signal peptide spans 1-18 (MKLLSVLALSATATSVLG). Asparagine 136 carries N-linked (GlcNAc...) asparagine glycosylation. Zn(2+) is bound by residues histidine 176 and aspartate 195. Asparagine 196 is a glycosylation site (N-linked (GlcNAc...) asparagine). The Zn(2+) site is built by glutamate 234 and aspartate 261. Asparagine 284 carries N-linked (GlcNAc...) asparagine glycosylation. Cysteine 310 and cysteine 314 are joined by a disulfide. Residue histidine 343 coordinates Zn(2+).

It belongs to the peptidase M28 family. M28E subfamily. Monomer. Zn(2+) serves as cofactor.

It is found in the secreted. Functionally, extracellular aminopeptidase which contributes to pathogenicity. The chain is Leucine aminopeptidase 1 (LAP1) from Trichophyton equinum (Horse ringworm fungus).